A 284-amino-acid chain; its full sequence is BTB/POZ domain-containing protein 2 (284 aa).

The BTB domain maps to 37 to 108 (SDTTLIIKGE…LYCDSPRIPA (72 aa)).

Interacts with cul3.

It localises to the cytoplasm. The protein localises to the nucleus. Its pathway is protein modification; protein ubiquitination. In terms of biological role, probable substrate-specific adapter of an E3 ubiquitin-protein ligase complex which mediates the ubiquitination and subsequent proteasomal degradation of target proteins. The chain is BTB/POZ domain-containing protein 2 (btb2) from Schizosaccharomyces pombe (strain 972 / ATCC 24843) (Fission yeast).